The chain runs to 437 residues: Sodium/bile acid cotransporter 4 (437 aa).

Residues 1–103 lie on the Extracellular side of the membrane; it reads MDGLDNTTRL…PPFWDTPLNH (103 aa). 3 N-linked (GlcNAc...) asparagine glycosylation sites follow: Asn-6, Asn-20, and Asn-26. A disordered region spans residues 16–84; the sequence is LLPDNLTLSP…GGVAGQDSST (69 aa). Low complexity predominate over residues 21 to 50; the sequence is LTLSPNASSTSASTLSPLPVTSSPSPGLSL. The helical transmembrane segment at 104 to 124 threads the bilayer; the sequence is GLNVFVGAALCITMLGLGCTV. Residues 125–140 are Cytoplasmic-facing; the sequence is DVNHFGAHVRRPVGAL. The chain crosses the membrane as a helical span at residues 141–161; that stretch reads LAALCQFGFLPLLAFLLALAF. Topologically, residues 162–197 are extracellular; that stretch reads KLDEVAAVAVLLCGCCPGGNLSNLMSLLVDGDMNLS. N-linked (GlcNAc...) asparagine glycosylation is found at Asn-181 and Asn-195. A helical transmembrane segment spans residues 198–218; it reads IIMTISSTLLALVLMPLCLWI. At 219 to 233 the chain is on the cytoplasmic side; the sequence is YSRAWINTPLVQLLP. A helical transmembrane segment spans residues 234–254; that stretch reads LGAVTLTLCSTLIPIGLGVFI. The Extracellular portion of the chain corresponds to 255-267; sequence RYKYNRVADYIVK. The helical transmembrane segment at 268–288 threads the bilayer; it reads VSLCSLLVTLVVLFIMTGTML. Residues 289–291 are Cytoplasmic-facing; that stretch reads GPE. The chain crosses the membrane as a helical span at residues 292 to 312; sequence LLASIPAAVYVVAIFMPLAGY. At 313–360 the chain is on the extracellular side; it reads ASGYGLATLFHLPPNCKRTVCLETGSQNVQLCTAILKLAFPPRFIGSM. Residues 361 to 381 form a helical membrane-spanning segment; it reads YMFPLLYALFQSAEAGVFVLI. The Cytoplasmic segment spans residues 382-437; sequence YKMYGSEILHKREALDEDDDTDISYKKLKEEELADTSYGTVGTDDLVLMETTQTSL.

Belongs to the bile acid:sodium symporter (BASS) (TC 2.A.28) family. Activated following N-terminal proteolytic cleavage by thrombin and/or proteases. In terms of tissue distribution, mainly expressed in the central nervous system cholinergic neurons. Expressed (at protein level) in motor regions of the spinal cord and rhombencephalon, in mesopontine cholinergic neurons, the medial habenula, cholinergic areas of the forebrain, and the gut myenteric plexus.

It is found in the cell membrane. Functionally, transporter for bile acids. This chain is Sodium/bile acid cotransporter 4 (Slc10a4), found in Rattus norvegicus (Rat).